The chain runs to 326 residues: tRNA(Ile)-lysidine synthase (326 aa).

25-30 serves as a coordination point for ATP; that stretch reads SGGQDS.

This sequence belongs to the tRNA(Ile)-lysidine synthase family.

It localises to the cytoplasm. The catalysed reaction is cytidine(34) in tRNA(Ile2) + L-lysine + ATP = lysidine(34) in tRNA(Ile2) + AMP + diphosphate + H(+). Its function is as follows. Ligates lysine onto the cytidine present at position 34 of the AUA codon-specific tRNA(Ile) that contains the anticodon CAU, in an ATP-dependent manner. Cytidine is converted to lysidine, thus changing the amino acid specificity of the tRNA from methionine to isoleucine. The sequence is that of tRNA(Ile)-lysidine synthase from Prochlorococcus marinus (strain NATL1A).